Here is a 276-residue protein sequence, read N- to C-terminus: Large ribosomal subunit protein uL2 (276 aa).

The disordered stretch occupies residues 218–255 (PTVRGSAMNPCDHPHGGGEGRTPIGMSSPVTPWGKPAL).

The protein belongs to the universal ribosomal protein uL2 family. In terms of assembly, part of the 50S ribosomal subunit. Forms a bridge to the 30S subunit in the 70S ribosome.

Its function is as follows. One of the primary rRNA binding proteins. Required for association of the 30S and 50S subunits to form the 70S ribosome, for tRNA binding and peptide bond formation. It has been suggested to have peptidyltransferase activity; this is somewhat controversial. Makes several contacts with the 16S rRNA in the 70S ribosome. This chain is Large ribosomal subunit protein uL2, found in Clostridium tetani (strain Massachusetts / E88).